Here is a 302-residue protein sequence, read N- to C-terminus: MHAGLEHIRDWFKGELLFHEPLARHVSLKVGGPVDLLATPDSREELQQLVTLLDQQQIPRFVLGGGFNLLPSDVGYRGCAISLKQINRLQLDDTVVAIEAGASNQSLARAVAELGLSGIEFLIGIPGSVGGAVRMNAGAHGSDIFSVVKTVTLLDQGQFRELPREQLTYGYRCFEIPDNSVIVAVTLQLSEDSLQAVRSRMEEQLGLRWATQNVKFPNAGSFFKNPPGESAWRLIDQAGLRGFSIGNAQVSEVHTNFLINRGNATAADFRALAAAVKERVKATCGIELEEEVQLLDSGECGQ.

Residues 29–192 enclose the FAD-binding PCMH-type domain; that stretch reads KVGGPVDLLA…VAVTLQLSED (164 aa). Residue Arg-172 is part of the active site. Ser-221 functions as the Proton donor in the catalytic mechanism. Glu-291 is a catalytic residue.

This sequence belongs to the MurB family. It depends on FAD as a cofactor.

The protein localises to the cytoplasm. The enzyme catalyses UDP-N-acetyl-alpha-D-muramate + NADP(+) = UDP-N-acetyl-3-O-(1-carboxyvinyl)-alpha-D-glucosamine + NADPH + H(+). It participates in cell wall biogenesis; peptidoglycan biosynthesis. In terms of biological role, cell wall formation. This chain is UDP-N-acetylenolpyruvoylglucosamine reductase, found in Trichlorobacter lovleyi (strain ATCC BAA-1151 / DSM 17278 / SZ) (Geobacter lovleyi).